The primary structure comprises 138 residues: Small ribosomal subunit protein uS11c (138 aa).

This sequence belongs to the universal ribosomal protein uS11 family. Part of the 30S ribosomal subunit.

The protein resides in the plastid. Its subcellular location is the chloroplast. The protein is Small ribosomal subunit protein uS11c of Phaseolus vulgaris (Kidney bean).